A 147-amino-acid chain; its full sequence is Hemoglobin subunit beta (147 aa).

Val2 is modified (N-acetylvaline). Positions 3–147 (HLTGEEKAAV…VANALAHKYH (145 aa)) constitute a Globin domain. The residue at position 13 (Thr13) is a Phosphothreonine. The residue at position 45 (Ser45) is a Phosphoserine. Lys60 bears the N6-acetyllysine mark. His64 contributes to the heme b binding site. Residue Lys83 is modified to N6-acetyllysine. His93 serves as a coordination point for heme b. An S-nitrosocysteine modification is found at Cys94. Residue Lys145 is modified to N6-acetyllysine.

It belongs to the globin family. In terms of assembly, heterotetramer of two alpha chains and two beta chains. As to expression, red blood cells.

Its function is as follows. Involved in oxygen transport from the lung to the various peripheral tissues. This chain is Hemoglobin subunit beta (HBB), found in Aotus azarae (Azara's night monkey).